The primary structure comprises 809 residues: TPR repeat-containing protein TP_0920 (809 aa).

The interval 103-125 (PGEARALPNSEQPEVPASLDSTS) is disordered. 9 TPR repeats span residues 315-348 (LREY…DPHC), 383-416 (AFLS…DPHQ), 418-450 (LFAL…FLAQ), 471-504 (TEVR…GSAD), 513-550 (LLLR…APDC), 552-582 (LYHF…DPDN), 583-616 (GWLH…LPHE), 656-689 (GQAF…EPQN), and 723-756 (AHVY…WPQC).

The protein is TPR repeat-containing protein TP_0920 of Treponema pallidum (strain Nichols).